The primary structure comprises 237 residues: Cysteine-rich venom protein ENH2 (237 aa).

A signal peptide spans 1–18 (MIVFILLSLAAVLQQFVA). The region spanning 37–165 (VDMHNSFRRS…PYNYFYVCQY (129 aa)) is the SCP domain. Intrachain disulfides connect C74–C152, C91–C166, C147–C163, C185–C192, C188–C197, C210–C228, and C219–C232. In terms of domain architecture, ShKT spans 201–237 (CPITNTFTNCDSLLQQNSCEDSYIKTNCGASCFGQDK).

The protein belongs to the CRISP family. In terms of tissue distribution, expressed by the venom gland.

The protein resides in the secreted. Blocks contraction of smooth muscle elicited by high potassium-induced depolarization, but does not block caffeine-stimulated contraction. May target voltage-gated calcium channels on smooth muscle. This chain is Cysteine-rich venom protein ENH2, found in Pseudoferania polylepis (Macleay's water snake).